We begin with the raw amino-acid sequence, 89 residues long: Large ribosomal subunit protein bL31B (89 aa).

The protein belongs to the bacterial ribosomal protein bL31 family. Type B subfamily. Part of the 50S ribosomal subunit.

This chain is Large ribosomal subunit protein bL31B, found in Corynebacterium aurimucosum (strain ATCC 700975 / DSM 44827 / CIP 107346 / CN-1) (Corynebacterium nigricans).